The following is a 407-amino-acid chain: MTQETTTLTGQSPPPVRDWPALDLDGPEFDPVLAELMREGPLTRVRLPHGEGWAWLATRYDDVKAITNDPRFGRAEVTQRQITRLAPHFKPRPGSLAFADQPDHNRLRRAVAGAFTVGATKRLRPRAQEILDGLVDGILAEGPPADLVERVLEPFPIAVVSEVMGVPAADRERVHSWTRQIISTSGGAEAAERAKRGLYGWITETVRARAGSEGGDVYSMLGAAVGRGEVGETEAVGLAGPLQIGGEAVTHNVGQMLYLLLTRRELMARMRERPGARGTALDELLRWISHRTSVGLARIALEDVEVHGTRIAAGEPVYVSYLAANRDPDVFPDPDRIDLDRDPNPHLAYGNGHHFCTGAVLARMQTELLVDTLLERLPGLRLAVPAEQVAWRRKTMIRGPRTLPCTW.

A compositionally biased stretch (polar residues) spans 1 to 11 (MTQETTTLTGQ). The interval 1–20 (MTQETTTLTGQSPPPVRDWP) is disordered. Flaviolin-binding positions include Arg92, Tyr199, and 290 to 291 (HR). Cys356 provides a ligand contact to heme.

This sequence belongs to the cytochrome P450 family. Requires heme as cofactor.

The enzyme catalyses 2 flaviolin + 2 reduced [2Fe-2S]-[ferredoxin] + O2 + H(+) = 3,3'-biflaviolin + 2 oxidized [2Fe-2S]-[ferredoxin] + 2 H2O. The catalysed reaction is 2 flaviolin + 2 reduced [2Fe-2S]-[ferredoxin] + O2 + H(+) = 3,8'-biflaviolin + 2 oxidized [2Fe-2S]-[ferredoxin] + 2 H2O. Its pathway is pigment biosynthesis. Catalyzes oxidative C-C coupling reaction to polymerize flaviolin and form highly conjugated pigments which protect the soil bacterium from deleterious effects of UV irradiation (two isomers of biflaviolin and one triflaviolin). This Streptomyces coelicolor (strain ATCC BAA-471 / A3(2) / M145) protein is Biflaviolin synthase CYP158A1.